The primary structure comprises 151 residues: 3-hydroxyacyl-[acyl-carrier-protein] dehydratase FabZ (151 aa).

His-57 is a catalytic residue.

Belongs to the thioester dehydratase family. FabZ subfamily.

Its subcellular location is the cytoplasm. The catalysed reaction is a (3R)-hydroxyacyl-[ACP] = a (2E)-enoyl-[ACP] + H2O. In terms of biological role, involved in unsaturated fatty acids biosynthesis. Catalyzes the dehydration of short chain beta-hydroxyacyl-ACPs and long chain saturated and unsaturated beta-hydroxyacyl-ACPs. This Synechococcus sp. (strain CC9605) protein is 3-hydroxyacyl-[acyl-carrier-protein] dehydratase FabZ.